Reading from the N-terminus, the 209-residue chain is Uridine kinase (209 aa).

12-19 is an ATP binding site; the sequence is GGSGGGKT.

Belongs to the uridine kinase family.

The protein localises to the cytoplasm. It carries out the reaction uridine + ATP = UMP + ADP + H(+). The enzyme catalyses cytidine + ATP = CMP + ADP + H(+). It participates in pyrimidine metabolism; CTP biosynthesis via salvage pathway; CTP from cytidine: step 1/3. The protein operates within pyrimidine metabolism; UMP biosynthesis via salvage pathway; UMP from uridine: step 1/1. This Streptococcus agalactiae serotype V (strain ATCC BAA-611 / 2603 V/R) protein is Uridine kinase.